The chain runs to 133 residues: Large-conductance mechanosensitive channel (133 aa).

The next 2 membrane-spanning stretches (helical) occupy residues 10–30 (FAVK…GAFG) and 76–96 (GAFI…FSMV).

The protein belongs to the MscL family. In terms of assembly, homopentamer.

The protein resides in the cell inner membrane. Its function is as follows. Channel that opens in response to stretch forces in the membrane lipid bilayer. May participate in the regulation of osmotic pressure changes within the cell. In Haemophilus ducreyi (strain 35000HP / ATCC 700724), this protein is Large-conductance mechanosensitive channel.